Here is a 601-residue protein sequence, read N- to C-terminus: ATP-dependent lipid A-core flippase (601 aa).

5 helical membrane-spanning segments follow: residues 33 to 53, 72 to 92, 158 to 178, 255 to 275, and 283 to 303; these read CVAV…AKLI, VSLM…LSEY, VIGL…VFLV, LGGG…LYVV, and TITP…LSPI. In terms of domain architecture, ABC transmembrane type-1 spans 34–315; that stretch reads VAVVAMIAYA…LSQVVSVMQR (282 aa). Residues 347-583 enclose the ABC transporter domain; the sequence is IEYRHVSLVY…RGGYADLYAM (237 aa). ATP is bound at residue 381–388; it reads GQSGSGKT.

The protein belongs to the ABC transporter superfamily. Lipid exporter (TC 3.A.1.106) family. As to quaternary structure, homodimer.

The protein localises to the cell inner membrane. The catalysed reaction is ATP + H2O + lipid A-core oligosaccharideSide 1 = ADP + phosphate + lipid A-core oligosaccharideSide 2.. Its function is as follows. Involved in lipopolysaccharide (LPS) biosynthesis. Translocates lipid A-core from the inner to the outer leaflet of the inner membrane. Transmembrane domains (TMD) form a pore in the inner membrane and the ATP-binding domain (NBD) is responsible for energy generation. The protein is ATP-dependent lipid A-core flippase of Methylococcus capsulatus (strain ATCC 33009 / NCIMB 11132 / Bath).